A 213-amino-acid chain; its full sequence is StAR-related lipid transfer protein 5 (213 aa).

The START domain maps to 1–213; it reads MDPSWATQES…LQKAVRKFHH (213 aa).

In terms of tissue distribution, expressed in most tissues, with highest levels in liver and in kidney.

In terms of biological role, may be involved in the intracellular transport of sterols or other lipids. May bind cholesterol or other sterols. The polypeptide is StAR-related lipid transfer protein 5 (Stard5) (Mus musculus (Mouse)).